Reading from the N-terminus, the 644-residue chain is Protein cueball (644 aa).

The N-terminal stretch at Met-1–Gly-26 is a signal peptide. Residues Thr-27–Ser-531 lie on the Extracellular side of the membrane. Residues Asn-82 and Asn-108 are each glycosylated (N-linked (GlcNAc...) asparagine). LDL-receptor class B repeat units follow at residues Met-121 to Arg-166, Arg-167 to Ser-211, and Asp-212 to Ala-257. Asn-175, Asn-190, and Asn-196 each carry an N-linked (GlcNAc...) asparagine glycan. Asn-313 carries an N-linked (GlcNAc...) asparagine glycan. EGF-like domains follow at residues Glu-398–Glu-430 and Glu-433–Glu-471. Cystine bridges form between Cys-402–Cys-411, Cys-406–Cys-421, Cys-437–Cys-447, Cys-441–Cys-459, and Cys-461–Cys-470. N-linked (GlcNAc...) asparagine glycosylation is found at Asn-473 and Asn-508. Residues Ser-532–Val-552 form a helical membrane-spanning segment. The Cytoplasmic portion of the chain corresponds to His-553–Tyr-644.

Belongs to the cueball family.

It localises to the cell membrane. Has a role in spermatogenesis and oogenesis. The protein is Protein cueball of Drosophila erecta (Fruit fly).